Reading from the N-terminus, the 495-residue chain is ATP-dependent RNA helicase dbp3 (495 aa).

The span at 1-14 (MAKRELQDKGSTEH) shows a compositional bias: basic and acidic residues. Positions 1 to 49 (MAKRELQDKGSTEHRAKKKSRNEKHTKKAEDSQASAQSSETQYTDPKEP) are disordered. The span at 15–27 (RAKKKSRNEKHTK) shows a compositional bias: basic residues. The Q motif signature appears at 97-105 (SFTSPTAIQ). The region spanning 109–284 (WPFLFSGRDV…ATFMTSPVTV (176 aa)) is the Helicase ATP-binding domain. 122-129 (AETGSGKT) contributes to the ATP binding site. The DEAD box signature appears at 231-234 (DEAD). One can recognise a Helicase C-terminal domain in the interval 315–464 (RLVQLLNKYQ…DVPEDLLKFG (150 aa)).

The protein belongs to the DEAD box helicase family. DDX5/DBP2 subfamily.

It is found in the nucleus. It localises to the nucleolus. It catalyses the reaction ATP + H2O = ADP + phosphate + H(+). ATP-dependent RNA helicase required for 60S ribosomal subunit synthesis. Involved in efficient pre-rRNA processing, predominantly at site A3, which is necessary for the normal formation of 25S and 5.8S rRNAs. This chain is ATP-dependent RNA helicase dbp3 (dbp3), found in Aspergillus niger (strain ATCC MYA-4892 / CBS 513.88 / FGSC A1513).